We begin with the raw amino-acid sequence, 583 residues long: Ras-specific guanine nucleotide-releasing factor RalGPS2 (583 aa).

Residues threonine 49–glycine 287 enclose the Ras-GEF domain. Positions lysine 283–lysine 314 are disordered. Phosphoserine occurs at positions 293, 296, 308, and 311. A PXXP motif is present at residues proline 324–proline 327. A Phosphothreonine modification is found at threonine 326. 2 positions are modified to phosphoserine: serine 329 and serine 343. A Phosphothreonine modification is found at threonine 361. The interval aspartate 372–serine 406 is disordered. Serine 374 bears the Phosphoserine mark. Positions glutamate 387–serine 403 are enriched in low complexity. Serine 422 carries the post-translational modification Phosphoserine. Residues alanine 457–glutamine 569 enclose the PH domain. The required for stimulation of nucleotide exchange by RALA stretch occupies residues threonine 459 to glutamate 583.

In terms of assembly, interacts with the SH3 domains of GRB2 and PLCG1. Interacts with RALA.

It localises to the cytoplasm. Its subcellular location is the cell membrane. In terms of biological role, guanine nucleotide exchange factor for the small GTPase RALA. May be involved in cytoskeletal organization. May also be involved in the stimulation of transcription in a Ras-independent fashion. The sequence is that of Ras-specific guanine nucleotide-releasing factor RalGPS2 (RALGPS2) from Homo sapiens (Human).